The primary structure comprises 201 residues: uncharacterized protein (201 aa).

This is an uncharacterized protein from Acanthamoeba polyphaga mimivirus (APMV).